The chain runs to 355 residues: Cobalt-precorrin-5B C(1)-methyltransferase (355 aa).

It belongs to the CbiD family.

It carries out the reaction Co-precorrin-5B + S-adenosyl-L-methionine = Co-precorrin-6A + S-adenosyl-L-homocysteine. The protein operates within cofactor biosynthesis; adenosylcobalamin biosynthesis; cob(II)yrinate a,c-diamide from sirohydrochlorin (anaerobic route): step 6/10. In terms of biological role, catalyzes the methylation of C-1 in cobalt-precorrin-5B to form cobalt-precorrin-6A. The sequence is that of Cobalt-precorrin-5B C(1)-methyltransferase from Parasynechococcus marenigrum (strain WH8102).